The sequence spans 337 residues: Holliday junction branch migration complex subunit RuvB (337 aa).

The interval methionine 1–tyrosine 180 is large ATPase domain (RuvB-L). ATP is bound by residues leucine 19, arginine 20, glycine 61, lysine 64, threonine 65, threonine 66, glutamate 127–phenylalanine 129, arginine 170, tyrosine 180, and arginine 217. Threonine 65 contributes to the Mg(2+) binding site. A small ATPAse domain (RuvB-S) region spans residues threonine 181 to glutamate 251. Positions glutamate 254 to phenylalanine 337 are head domain (RuvB-H). Arginine 309 and arginine 314 together coordinate DNA.

This sequence belongs to the RuvB family. Homohexamer. Forms an RuvA(8)-RuvB(12)-Holliday junction (HJ) complex. HJ DNA is sandwiched between 2 RuvA tetramers; dsDNA enters through RuvA and exits via RuvB. An RuvB hexamer assembles on each DNA strand where it exits the tetramer. Each RuvB hexamer is contacted by two RuvA subunits (via domain III) on 2 adjacent RuvB subunits; this complex drives branch migration. In the full resolvosome a probable DNA-RuvA(4)-RuvB(12)-RuvC(2) complex forms which resolves the HJ.

The protein localises to the cytoplasm. The enzyme catalyses ATP + H2O = ADP + phosphate + H(+). The RuvA-RuvB-RuvC complex processes Holliday junction (HJ) DNA during genetic recombination and DNA repair, while the RuvA-RuvB complex plays an important role in the rescue of blocked DNA replication forks via replication fork reversal (RFR). RuvA specifically binds to HJ cruciform DNA, conferring on it an open structure. The RuvB hexamer acts as an ATP-dependent pump, pulling dsDNA into and through the RuvAB complex. RuvB forms 2 homohexamers on either side of HJ DNA bound by 1 or 2 RuvA tetramers; 4 subunits per hexamer contact DNA at a time. Coordinated motions by a converter formed by DNA-disengaged RuvB subunits stimulates ATP hydrolysis and nucleotide exchange. Immobilization of the converter enables RuvB to convert the ATP-contained energy into a lever motion, pulling 2 nucleotides of DNA out of the RuvA tetramer per ATP hydrolyzed, thus driving DNA branch migration. The RuvB motors rotate together with the DNA substrate, which together with the progressing nucleotide cycle form the mechanistic basis for DNA recombination by continuous HJ branch migration. Branch migration allows RuvC to scan DNA until it finds its consensus sequence, where it cleaves and resolves cruciform DNA. This chain is Holliday junction branch migration complex subunit RuvB, found in Geobacter sp. (strain M21).